The sequence spans 310 residues: MAIALEYVREIYYRPLLQLVYEAQTVHRQHHPPGRVQLCALVNIKSGRCPEDCAYCPQSARYSTGIETYPLISLESLRQQAMAAQRAGATRLCMGAAWRSAPAGEAFERVLEMVRLVRKLGMEACVTLGMVSAAQAQQLAAAGLTAYNHNLDTSPAFYPRIITTRTYRDRLETLAHVAAAGLQICCGGIVGLGESDEDRIGLLHVLANLTPPPTSVPINALVPVAGTPLGQLPPPDPLLLVRTIATARLLLPTAQIRLSAGRKNLSESEQALCFLAGANSIFTGERLLTTPNPGQAADAALLEKLGLQPL.

A Radical SAM core domain is found at 34-262 (GRVQLCALVN…TAQIRLSAGR (229 aa)). Cys49, Cys53, and Cys56 together coordinate [4Fe-4S] cluster. Residues Cys93, Cys125, Cys185, and Arg257 each coordinate [2Fe-2S] cluster.

This sequence belongs to the radical SAM superfamily. Biotin synthase family. As to quaternary structure, homodimer. [4Fe-4S] cluster is required as a cofactor. It depends on [2Fe-2S] cluster as a cofactor.

It carries out the reaction (4R,5S)-dethiobiotin + (sulfur carrier)-SH + 2 reduced [2Fe-2S]-[ferredoxin] + 2 S-adenosyl-L-methionine = (sulfur carrier)-H + biotin + 2 5'-deoxyadenosine + 2 L-methionine + 2 oxidized [2Fe-2S]-[ferredoxin]. It participates in cofactor biosynthesis; biotin biosynthesis; biotin from 7,8-diaminononanoate: step 2/2. Functionally, catalyzes the conversion of dethiobiotin (DTB) to biotin by the insertion of a sulfur atom into dethiobiotin via a radical-based mechanism. This Synechococcus sp. (strain JA-3-3Ab) (Cyanobacteria bacterium Yellowstone A-Prime) protein is Biotin synthase.